The following is a 191-amino-acid chain: Peptidyl-tRNA hydrolase (191 aa).

TRNA is bound at residue Tyr14. The Proton acceptor role is filled by His19. Residues Tyr64, Asn66, and Asn112 each contribute to the tRNA site.

It belongs to the PTH family. As to quaternary structure, monomer.

It localises to the cytoplasm. It catalyses the reaction an N-acyl-L-alpha-aminoacyl-tRNA + H2O = an N-acyl-L-amino acid + a tRNA + H(+). Hydrolyzes ribosome-free peptidyl-tRNAs (with 1 or more amino acids incorporated), which drop off the ribosome during protein synthesis, or as a result of ribosome stalling. Functionally, catalyzes the release of premature peptidyl moieties from peptidyl-tRNA molecules trapped in stalled 50S ribosomal subunits, and thus maintains levels of free tRNAs and 50S ribosomes. This Clostridium beijerinckii (strain ATCC 51743 / NCIMB 8052) (Clostridium acetobutylicum) protein is Peptidyl-tRNA hydrolase.